Here is a 532-residue protein sequence, read N- to C-terminus: CTP synthase (532 aa).

Residues 1-267 (MTKFIFVTGG…DDIVLKILGL (267 aa)) are amidoligase domain. CTP is bound at residue serine 13. Serine 13 contributes to the UTP binding site. 14–19 (SLGKGI) is a binding site for ATP. Tyrosine 54 serves as a coordination point for L-glutamine. Residue aspartate 71 coordinates ATP. The Mg(2+) site is built by aspartate 71 and glutamate 141. Residues 148-150 (DIE), 188-193 (KTKPTQ), and lysine 224 each bind CTP. UTP contacts are provided by residues 188-193 (KTKPTQ) and lysine 224. In terms of domain architecture, Glutamine amidotransferase type-1 spans 292–532 (EIAIVGKYVE…EFVKATLANR (241 aa)). Glycine 354 contacts L-glutamine. The active-site Nucleophile; for glutamine hydrolysis is cysteine 381. L-glutamine-binding positions include 382–385 (LGMQ), glutamate 405, and arginine 462. Residues histidine 507 and glutamate 509 contribute to the active site.

Belongs to the CTP synthase family. In terms of assembly, homotetramer.

It carries out the reaction UTP + L-glutamine + ATP + H2O = CTP + L-glutamate + ADP + phosphate + 2 H(+). The enzyme catalyses L-glutamine + H2O = L-glutamate + NH4(+). The catalysed reaction is UTP + NH4(+) + ATP = CTP + ADP + phosphate + 2 H(+). Its pathway is pyrimidine metabolism; CTP biosynthesis via de novo pathway; CTP from UDP: step 2/2. Its activity is regulated as follows. Allosterically activated by GTP, when glutamine is the substrate; GTP has no effect on the reaction when ammonia is the substrate. The allosteric effector GTP functions by stabilizing the protein conformation that binds the tetrahedral intermediate(s) formed during glutamine hydrolysis. Inhibited by the product CTP, via allosteric rather than competitive inhibition. In terms of biological role, catalyzes the ATP-dependent amination of UTP to CTP with either L-glutamine or ammonia as the source of nitrogen. Regulates intracellular CTP levels through interactions with the four ribonucleotide triphosphates. This chain is CTP synthase, found in Desulfitobacterium hafniense (strain Y51).